We begin with the raw amino-acid sequence, 134 residues long: Aspartate 1-decarboxylase (134 aa).

Ser25 functions as the Schiff-base intermediate with substrate; via pyruvic acid in the catalytic mechanism. The residue at position 25 (Ser25) is a Pyruvic acid (Ser). Thr57 is a binding site for substrate. The Proton donor role is filled by Tyr58. 73–75 (GAA) is a binding site for substrate.

Belongs to the PanD family. Heterooctamer of four alpha and four beta subunits. It depends on pyruvate as a cofactor. Post-translationally, is synthesized initially as an inactive proenzyme, which is activated by self-cleavage at a specific serine bond to produce a beta-subunit with a hydroxyl group at its C-terminus and an alpha-subunit with a pyruvoyl group at its N-terminus.

It localises to the cytoplasm. It carries out the reaction L-aspartate + H(+) = beta-alanine + CO2. It participates in cofactor biosynthesis; (R)-pantothenate biosynthesis; beta-alanine from L-aspartate: step 1/1. In terms of biological role, catalyzes the pyruvoyl-dependent decarboxylation of aspartate to produce beta-alanine. In Mycolicibacterium gilvum (strain PYR-GCK) (Mycobacterium gilvum (strain PYR-GCK)), this protein is Aspartate 1-decarboxylase.